The sequence spans 240 residues: Lysoplasmalogenase TMEM86A (240 aa).

Topologically, residues 1-21 (MVSPVTVVKSEGPKLVPFFKA) are cytoplasmic. The helical transmembrane segment at 22–42 (TCVYFVLWLPSSSPSWVSTLI) threads the bilayer. A topological domain (extracellular) is located at residue Lys-43. A helical membrane pass occupies residues 44–64 (CLPIFCLWLFLLAHGLGFLLA). Residues 65 to 70 (HPSATR) lie on the Cytoplasmic side of the membrane. The helical transmembrane segment at 71 to 91 (IFVGLVFSAVGDAFLIWQDQG) threads the bilayer. A topological domain (extracellular) is located at residue Tyr-92. The helical transmembrane segment at 93 to 113 (FVHGLLMFAVTHMFYASAFGM) threads the bilayer. Over 114–115 (QP) the chain is Cytoplasmic. A helical membrane pass occupies residues 116–136 (LALRTGLVMAALSGLCYALLY). Topologically, residues 137-138 (PC) are extracellular. The chain crosses the membrane as a helical span at residues 139 to 159 (LSGAFTYLVGVYVALIGFMGW). The Cytoplasmic portion of the chain corresponds to 160-174 (RAMAGLRLAGADWRW). The chain crosses the membrane as a helical span at residues 175–195 (TELAAGSGALFFIISDLTIAL). Topologically, residues 196–206 (NKFCFPVPYSR) are extracellular. The helical transmembrane segment at 207-227 (ALIMSTYYVAQMLVALSAVES) threads the bilayer. The Cytoplasmic segment spans residues 228-240 (REPVEHYRLTKAN).

It belongs to the TMEM86 family. Expressed in the macrophages.

It localises to the endoplasmic reticulum membrane. The catalysed reaction is a 1-O-(1Z-alkenyl)-sn-glycero-3-phosphocholine + H2O = a 2,3-saturated aldehyde + sn-glycerol 3-phosphocholine. It carries out the reaction a 1-O-(1Z-alkenyl)-sn-glycero-3-phosphoethanolamine + H2O = a 2,3-saturated aldehyde + sn-glycero-3-phosphoethanolamine. Functionally, catalyzes the hydrolysis of the vinyl ether bond of choline or ethanolamine lysoplasmalogens, forming fatty aldehyde and glycerophosphocholine or glycerophosphoethanolamine, respectively and is specific for the sn-2-deacylated (lyso) form of plasmalogen. Plays an important role in lysoplasmalogen metabolism in the adipocyte tissue and macrophages. The sequence is that of Lysoplasmalogenase TMEM86A (TMEM86A) from Homo sapiens (Human).